Consider the following 397-residue polypeptide: Serpin B10 (397 aa).

Residues 74 to 77 (KKRK) carry the Nuclear localization signal motif.

The protein belongs to the serpin family. Ov-serpin subfamily.

The protein resides in the nucleus. It is found in the cytoplasm. Its function is as follows. Protease inhibitor that may play a role in the regulation of protease activities during hematopoiesis and apoptosis induced by TNF. May regulate protease activities in the cytoplasm and in the nucleus. This chain is Serpin B10 (Serpinb10), found in Mus musculus (Mouse).